We begin with the raw amino-acid sequence, 217 residues long: Methylthioribulose-1-phosphate dehydratase (217 aa).

Zn(2+) is bound by residues histidine 106 and histidine 108.

It belongs to the aldolase class II family. MtnB subfamily. Zn(2+) is required as a cofactor.

It carries out the reaction 5-(methylsulfanyl)-D-ribulose 1-phosphate = 5-methylsulfanyl-2,3-dioxopentyl phosphate + H2O. The protein operates within amino-acid biosynthesis; L-methionine biosynthesis via salvage pathway; L-methionine from S-methyl-5-thio-alpha-D-ribose 1-phosphate: step 2/6. Catalyzes the dehydration of methylthioribulose-1-phosphate (MTRu-1-P) into 2,3-diketo-5-methylthiopentyl-1-phosphate (DK-MTP-1-P). The chain is Methylthioribulose-1-phosphate dehydratase from Xanthomonas campestris pv. campestris (strain B100).